Reading from the N-terminus, the 88-residue chain is Small ribosomal subunit protein eS25B (88 aa).

It belongs to the eukaryotic ribosomal protein eS25 family. In terms of assembly, component of the small ribosomal subunit (SSU). Mature yeast ribosomes consist of a small (40S) and a large (60S) subunit. The 40S small subunit contains 1 molecule of ribosomal RNA (18S rRNA) and at least 33 different proteins. The large 60S subunit contains 3 rRNA molecules (25S, 5.8S and 5S rRNA) and at least 46 different proteins.

The protein localises to the cytoplasm. Component of the ribosome, a large ribonucleoprotein complex responsible for the synthesis of proteins in the cell. The small ribosomal subunit (SSU) binds messenger RNAs (mRNAs) and translates the encoded message by selecting cognate aminoacyl-transfer RNA (tRNA) molecules. The large subunit (LSU) contains the ribosomal catalytic site termed the peptidyl transferase center (PTC), which catalyzes the formation of peptide bonds, thereby polymerizing the amino acids delivered by tRNAs into a polypeptide chain. The nascent polypeptides leave the ribosome through a tunnel in the LSU and interact with protein factors that function in enzymatic processing, targeting, and the membrane insertion of nascent chains at the exit of the ribosomal tunnel. The chain is Small ribosomal subunit protein eS25B (rps2501) from Schizosaccharomyces pombe (strain 972 / ATCC 24843) (Fission yeast).